The primary structure comprises 162 residues: Caveolin-2 (162 aa).

Residues 1–86 lie on the Cytoplasmic side of the membrane; the sequence is MGLETEKADV…FEISKYVMYK (86 aa). Position 19 is a phosphotyrosine; by SRC (Y19). Residues S20 and S23 each carry the phosphoserine modification. At Y27 the chain carries Phosphotyrosine; by SRC. S36 bears the Phosphoserine mark. An intramembrane region (helical) is located at residues 87–107; it reads FLTVFLSIPLAFLAGILFATL. The Cytoplasmic segment spans residues 108-162; that stretch reads SCLHIWIIMPFVKTCLMVLPSVQTIWKSVTDAIIAPLCTSIGRSFSSVSLQLSHD.

It belongs to the caveolin family. Monomer or homodimer. Interacts with CAV1; the interaction forms a stable heterooligomeric complex that is required for targeting to lipid rafts and for caveolae formation. Tyrosine phosphorylated forms do not form heterooligomers with the Tyr-19-phosphorylated form existing as a monomer or dimer, and the Tyr-27-form as a monomer only. Interacts (tyrosine phosphorylated form) with the SH2 domain-containing proteins, RASA1, NCK1 and SRC. Interacts (tyrosine phosphorylated form) with INSR, the interaction (Tyr-27-phosphorylated form) is increased on insulin stimulation. Interacts (Tyr-19 phosphorylated form) with MAPK1 (phosphorylated form); the interaction, promoted by insulin, leads to nuclear location and MAPK1 activation. Interacts with STAT3; the interaction is increased on insulin-induced tyrosine phosphorylation leading to STAT activation. Post-translationally, phosphorylated on serine and tyrosine residues. CAV1 promotes phosphorylation on Ser-23 which then targets the complex to the plasma membrane, lipid rafts and caveolae. Phosphorylation on Ser-36 appears to modulate mitosis in endothelial cells. Phosphorylation on both Tyr-19 and Tyr-27 is required for insulin-induced 'Ser-727' phosphorylation of STAT3 and its activation. Phosphorylation on Tyr-19 is required for insulin-induced phosphorylation of MAPK1 and DNA binding of STAT3. Tyrosine phosphorylation is induced by both EGF and insulin (By. similarity).

The protein localises to the nucleus. It is found in the cytoplasm. Its subcellular location is the golgi apparatus membrane. It localises to the cell membrane. The protein resides in the membrane. The protein localises to the caveola. In terms of biological role, may act as a scaffolding protein within caveolar membranes. Interacts directly with G-protein alpha subunits and can functionally regulate their activity. Acts as an accessory protein in conjunction with CAV1 in targeting to lipid rafts and driving caveolae formation. The Ser-36 phosphorylated form has a role in modulating mitosis in endothelial cells. Positive regulator of cellular mitogenesis of the MAPK signaling pathway. Required for the insulin-stimulated nuclear translocation and activation of MAPK1 and STAT3, and the subsequent regulation of cell cycle progression. The protein is Caveolin-2 (CAV2) of Saimiri boliviensis boliviensis (Bolivian squirrel monkey).